The following is a 1151-amino-acid chain: Importin beta (1151 aa).

24 HEAT repeats span residues 1-36, 37-82, 83-132, 133-175, 176-222, 223-269, 270-316, 317-377, 378-416, 417-453, 454-495, 496-540, 541-593, 594-642, 643-704, 705-756, 757-811, 812-880, 881-932, 933-978, 979-1027, 1028-1074, 1075-1120, and 1121-1151; these read MDLA…KQEE, PASY…GNGN, PECV…VAQF, PEFF…TKIG, GKAI…DSVI, PNSV…AVLK, PMVK…RAKK, AISE…KVIF, PLIK…LVTK, EDIV…EDYA, PTFQ…HLKK, AETY…LKND, FADM…AGTL, PQLF…PETF, PKYM…MRKT, PAAF…TVAS, PPAV…SYTE, TVNK…ALGD, LSLD…KYLS, PANS…YEGD, PGLA…AQAF, PTEL…ARND, PNFM…VLTQ, and IAGH…SVRQ.

The protein belongs to the importin beta family.

The protein resides in the nucleus intermembrane space. The protein localises to the cytoplasm. It is found in the nucleus. Functionally, functions in nuclear protein import as nuclear transport receptor. Involved in encystation process. Constitutive expression enhances cyst production and increases transcription of endogenous genes involved in encystation. Level of mRNA of the transcriptional factor myb1-like protein increases in early stages of the encystation process followed by increased mRNAs of the cyst wall proteins cwp1-3. This Giardia intestinalis (strain ATCC 50803 / WB clone C6) (Giardia lamblia) protein is Importin beta.